The primary structure comprises 23 residues: Brevinin-1SE (23 aa).

Cysteines 17 and 23 form a disulfide.

Expressed by the skin glands.

The protein resides in the secreted. Its function is as follows. Mast cell degranulating peptide. Causes histamine release from rat peritoneal mast cells in vitro. Has antibacterial activity against the Gram-negative bacterium E.coli K12 and Gram-positive bacterium M.luteus NCT C2665. The protein is Brevinin-1SE of Lithobates sevosus (Dusky gopher frog).